A 132-amino-acid chain; its full sequence is Sec-independent protein translocase protein TatB (132 aa).

Residues 2 to 22 (FDGIGFMELLLIGILGLVVLG) form a helical membrane-spanning segment. Polar residues-rich tracts occupy residues 86–95 (LKQAAQSVNR) and 116–132 (IAET…KNNG). The interval 86–132 (LKQAAQSVNRPYQLDESNEQEPKIAPPQANIAETPTQSGDTHSKNNG) is disordered.

The protein belongs to the TatB family. The Tat system comprises two distinct complexes: a TatABC complex, containing multiple copies of TatA, TatB and TatC subunits, and a separate TatA complex, containing only TatA subunits. Substrates initially bind to the TatABC complex, which probably triggers association of the separate TatA complex to form the active translocon.

It is found in the cell inner membrane. Its function is as follows. Part of the twin-arginine translocation (Tat) system that transports large folded proteins containing a characteristic twin-arginine motif in their signal peptide across membranes. Together with TatC, TatB is part of a receptor directly interacting with Tat signal peptides. TatB may form an oligomeric binding site that transiently accommodates folded Tat precursor proteins before their translocation. The polypeptide is Sec-independent protein translocase protein TatB (Shewanella denitrificans (strain OS217 / ATCC BAA-1090 / DSM 15013)).